A 430-amino-acid polypeptide reads, in one-letter code: Adenylosuccinate synthetase (430 aa).

Residues 12–18 (GDEGKGK) and 40–42 (GHT) contribute to the GTP site. The Proton acceptor role is filled by Asp-13. Mg(2+) is bound by residues Asp-13 and Gly-40. IMP-binding positions include 13-16 (DEGK), 38-41 (NAGH), Thr-130, Arg-144, Gln-224, Thr-239, and Arg-303. The active-site Proton donor is His-41. 299 to 305 (TVTGRKR) lines the substrate pocket. Residues Arg-305, 331–333 (KLD), and 413–415 (STS) contribute to the GTP site.

It belongs to the adenylosuccinate synthetase family. In terms of assembly, homodimer. It depends on Mg(2+) as a cofactor.

The protein resides in the cytoplasm. It catalyses the reaction IMP + L-aspartate + GTP = N(6)-(1,2-dicarboxyethyl)-AMP + GDP + phosphate + 2 H(+). It functions in the pathway purine metabolism; AMP biosynthesis via de novo pathway; AMP from IMP: step 1/2. In terms of biological role, plays an important role in the de novo pathway of purine nucleotide biosynthesis. Catalyzes the first committed step in the biosynthesis of AMP from IMP. The sequence is that of Adenylosuccinate synthetase from Methylorubrum extorquens (strain CM4 / NCIMB 13688) (Methylobacterium extorquens).